Consider the following 462-residue polypeptide: Glutamate decarboxylase alpha (462 aa).

At Lys273 the chain carries N6-(pyridoxal phosphate)lysine.

This sequence belongs to the group II decarboxylase family. Pyridoxal 5'-phosphate serves as cofactor.

The catalysed reaction is L-glutamate + H(+) = 4-aminobutanoate + CO2. In terms of biological role, converts internalized glutamate to GABA and increases the internal pH. Involved in glutamate-dependent acid resistance in gastric fluid. The sequence is that of Glutamate decarboxylase alpha (gadA) from Listeria monocytogenes serovar 1/2a (strain ATCC BAA-679 / EGD-e).